The primary structure comprises 341 residues: tRNA N6-adenosine threonylcarbamoyltransferase (341 aa).

Residues histidine 115 and histidine 119 each coordinate Fe cation. Residues 137 to 141 (IVSGG), aspartate 170, glycine 183, aspartate 187, and asparagine 276 each bind substrate. Aspartate 304 serves as a coordination point for Fe cation.

This sequence belongs to the KAE1 / TsaD family. It depends on Fe(2+) as a cofactor.

It is found in the cytoplasm. It catalyses the reaction L-threonylcarbamoyladenylate + adenosine(37) in tRNA = N(6)-L-threonylcarbamoyladenosine(37) in tRNA + AMP + H(+). Its function is as follows. Required for the formation of a threonylcarbamoyl group on adenosine at position 37 (t(6)A37) in tRNAs that read codons beginning with adenine. Is involved in the transfer of the threonylcarbamoyl moiety of threonylcarbamoyl-AMP (TC-AMP) to the N6 group of A37, together with TsaE and TsaB. TsaD likely plays a direct catalytic role in this reaction. This is tRNA N6-adenosine threonylcarbamoyltransferase from Staphylococcus aureus (strain JH1).